Consider the following 352-residue polypeptide: Peptide chain release factor 1 (352 aa).

Residue Q233 is modified to N5-methylglutamine. The tract at residues 288-309 is disordered; it reads NAKDRKEQVGSGDRSERIRTYN. Basic and acidic residues predominate over residues 289 to 306; the sequence is AKDRKEQVGSGDRSERIR.

This sequence belongs to the prokaryotic/mitochondrial release factor family. Post-translationally, methylated by PrmC. Methylation increases the termination efficiency of RF1.

It is found in the cytoplasm. Peptide chain release factor 1 directs the termination of translation in response to the peptide chain termination codons UAG and UAA. In Helicobacter acinonychis (strain Sheeba), this protein is Peptide chain release factor 1.